The following is a 562-amino-acid chain: Tetratricopeptide repeat protein 39A (562 aa).

TPR repeat units lie at residues alanine 273–tryptophan 306, cysteine 463–isoleucine 496, and proline 504–tyrosine 537.

It belongs to the TTC39 family.

In Xenopus tropicalis (Western clawed frog), this protein is Tetratricopeptide repeat protein 39A (ttc39a).